Here is a 204-residue protein sequence, read N- to C-terminus: Peptide deformylase (204 aa).

The Fe cation site is built by Cys131 and His174. Residue Glu175 is part of the active site. Residue His178 participates in Fe cation binding.

Belongs to the polypeptide deformylase family. Fe(2+) serves as cofactor.

The catalysed reaction is N-terminal N-formyl-L-methionyl-[peptide] + H2O = N-terminal L-methionyl-[peptide] + formate. In terms of biological role, removes the formyl group from the N-terminal Met of newly synthesized proteins. Requires at least a dipeptide for an efficient rate of reaction. N-terminal L-methionine is a prerequisite for activity but the enzyme has broad specificity at other positions. In Streptococcus gordonii (strain Challis / ATCC 35105 / BCRC 15272 / CH1 / DL1 / V288), this protein is Peptide deformylase.